Here is a 522-residue protein sequence, read N- to C-terminus: Zinc finger protein STOP1 homolog (522 aa).

2 stretches are compositionally biased toward polar residues: residues 1–12 (MDSGLGRSSETS) and 19–40 (MASN…SSMD). 2 disordered regions span residues 1 to 43 (MDSG…DQPP) and 234 to 260 (CGGE…EREN). A compositionally biased stretch (basic and acidic residues) spans 244 to 260 (MEDHDVKESDDGGEREN). Residues 282 to 304 (HFCLICGKGFKRDANLRMHMRGH) form a C2H2-type 1 zinc finger. The C2H2-type 2; atypical zinc finger occupies 390–421 (KHCGRDKWLCSCGTTFSRKDKLFGHVALFQGH).

It is found in the nucleus. In terms of biological role, probable transcription factor that may be involved in aluminum tolerance. The sequence is that of Zinc finger protein STOP1 homolog from Oryza sativa subsp. japonica (Rice).